Consider the following 254-residue polypeptide: Ribonuclease HII (254 aa).

Residues 70–254 form the RNase H type-2 domain; the sequence is RYICGIDEVG…ASFIKNLTSC (185 aa). 3 residues coordinate a divalent metal cation: Asp76, Glu77, and Asp168.

Belongs to the RNase HII family. Requires Mn(2+) as cofactor. It depends on Mg(2+) as a cofactor.

It localises to the cytoplasm. The catalysed reaction is Endonucleolytic cleavage to 5'-phosphomonoester.. Its function is as follows. Endonuclease that specifically degrades the RNA of RNA-DNA hybrids. This chain is Ribonuclease HII, found in Lachnoclostridium phytofermentans (strain ATCC 700394 / DSM 18823 / ISDg) (Clostridium phytofermentans).